A 262-amino-acid polypeptide reads, in one-letter code: 4-hydroxy-2-oxo-heptane-1,7-dioate aldolase (262 aa).

His-45 serves as the catalytic Proton acceptor. Gln-147 is a binding site for substrate. Glu-149 contacts a divalent metal cation. Substrate-binding residues include Ala-174 and Asp-175. Asp-175 contacts a divalent metal cation.

It belongs to the HpcH/HpaI aldolase family. As to quaternary structure, homohexamer; trimer of dimers. The cofactor is a divalent metal cation.

It carries out the reaction 4-hydroxy-2-oxoheptanedioate = succinate semialdehyde + pyruvate. Its pathway is aromatic compound metabolism; 4-hydroxyphenylacetate degradation; pyruvate and succinate semialdehyde from 4-hydroxyphenylacetate: step 7/7. Its function is as follows. Catalyzes the reversible retro-aldol cleavage of 4-hydroxy-2-ketoheptane-1,7-dioate (HKHD) to pyruvate and succinic semialdehyde. The sequence is that of 4-hydroxy-2-oxo-heptane-1,7-dioate aldolase from Shigella boydii serotype 18 (strain CDC 3083-94 / BS512).